A 291-amino-acid chain; its full sequence is Probable xyloglucan endotransglucosylase/hydrolase protein 16 (291 aa).

An N-terminal signal peptide occupies residues 1–24 (MGRILNRTVLMTLLVVTMAGTAFS). One can recognise a GH16 domain in the interval 25 to 215 (GSFNEEFDLT…WSKAPFTAYY (191 aa)). The active-site Nucleophile is the E101. Catalysis depends on E105, which acts as the Proton donor. Xyloglucan is bound at residue E105. N-linked (GlcNAc...) asparagine glycosylation is present at N109. Xyloglucan-binding positions include 118-120 (HTN), 128-130 (NRE), 194-195 (DW), and G199. Intrachain disulfides connect C223-C232 and C272-C286. R277 is a binding site for xyloglucan.

This sequence belongs to the glycosyl hydrolase 16 family. XTH group 2 subfamily. Contains at least one intrachain disulfide bond essential for its enzymatic activity.

It is found in the secreted. The protein localises to the cell wall. Its subcellular location is the extracellular space. It localises to the apoplast. The enzyme catalyses breaks a beta-(1-&gt;4) bond in the backbone of a xyloglucan and transfers the xyloglucanyl segment on to O-4 of the non-reducing terminal glucose residue of an acceptor, which can be a xyloglucan or an oligosaccharide of xyloglucan.. In terms of biological role, catalyzes xyloglucan endohydrolysis (XEH) and/or endotransglycosylation (XET). Cleaves and religates xyloglucan polymers, an essential constituent of the primary cell wall, and thereby participates in cell wall construction of growing tissues. In Arabidopsis thaliana (Mouse-ear cress), this protein is Probable xyloglucan endotransglucosylase/hydrolase protein 16 (XTH16).